The primary structure comprises 195 residues: AP-4-A phosphorylase (195 aa).

The segment covering 1-17 (MSDEDRTDRATEDHTIF) has biased composition (basic and acidic residues). Positions 1–20 (MSDEDRTDRATEDHTIFDRG) are disordered. The 110-residue stretch at 57–166 (PFTEIPQLSD…VPRWGGDANF (110 aa)) folds into the HIT domain. Positions 151-155 (HLHVH) match the Histidine triad motif motif. The active-site Tele-AMP-histidine intermediate is His-153.

As to quaternary structure, homotetramer. Requires a divalent metal cation as cofactor.

The enzyme catalyses ADP + ATP + H(+) = P(1),P(4)-bis(5'-adenosyl) tetraphosphate + phosphate. In terms of biological role, catabolizes diadenosine 5',5'''-P1,P4-tetraphosphate (Ap4A) into ADP and ATP. The polypeptide is AP-4-A phosphorylase (Mycobacterium tuberculosis (strain CDC 1551 / Oshkosh)).